Here is a 334-residue protein sequence, read N- to C-terminus: MKKPFPFSAIVGQEQMKQAMVLTAIDPGIGGVLVFGDRGTGKSTAVRALAALLPLIKAVEGCPVNSARPEDCPEWAHVSSTTMIERPTPVVDLPLGVTEDRVVGALDIERALTRGEKAFEPGLLARANRGYLYIDEVNLLEDHIVDLLLDVAQSGENVVEREGLSIRHPARFVLVGSGNPEEGELRPQLLDRFGLSVEVRSPRDVETRVEVITRRDAYDADHDAFMEKWGAEDMQLRGRILGARAALPQLKTPNTVLHDCAALCIALGSDGLRGELTLLRAARAQAAFEGAEAVGRSHLRSVATMALSHRLRRDPLDEAGSVSRVERCVAEVLP.

36–43 contacts ATP; the sequence is GDRGTGKS.

This sequence belongs to the Mg-chelatase subunits D/I family.

The catalysed reaction is protoporphyrin IX + Mg(2+) + ATP + H2O = Mg-protoporphyrin IX + ADP + phosphate + 3 H(+). The protein operates within porphyrin-containing compound metabolism; bacteriochlorophyll biosynthesis. Its function is as follows. Involved in bacteriochlorophyll biosynthesis; introduces a magnesium ion into protoporphyrin IX to yield Mg-protoporphyrin IX. This chain is Magnesium-chelatase 38 kDa subunit (bchI), found in Cereibacter sphaeroides (strain ATCC 17023 / DSM 158 / JCM 6121 / CCUG 31486 / LMG 2827 / NBRC 12203 / NCIMB 8253 / ATH 2.4.1.) (Rhodobacter sphaeroides).